Reading from the N-terminus, the 274-residue chain is Pantothenate synthetase (274 aa).

Position 26-33 (26-33) interacts with ATP; the sequence is MGNLHAGH. Catalysis depends on His-33, which acts as the Proton donor. Gln-57 lines the (R)-pantoate pocket. Gln-57 lines the beta-alanine pocket. Residue 143 to 146 coordinates ATP; that stretch reads GKKD. (R)-pantoate is bound at residue Gln-149. Residues Val-172 and 180–183 contribute to the ATP site; that span reads LSSR.

The protein belongs to the pantothenate synthetase family. Homodimer.

The protein resides in the cytoplasm. The catalysed reaction is (R)-pantoate + beta-alanine + ATP = (R)-pantothenate + AMP + diphosphate + H(+). Its pathway is cofactor biosynthesis; (R)-pantothenate biosynthesis; (R)-pantothenate from (R)-pantoate and beta-alanine: step 1/1. Its function is as follows. Catalyzes the condensation of pantoate with beta-alanine in an ATP-dependent reaction via a pantoyl-adenylate intermediate. The protein is Pantothenate synthetase of Dechloromonas aromatica (strain RCB).